Here is a 714-residue protein sequence, read N- to C-terminus: Ribonucleoside-diphosphate reductase 2 subunit alpha (714 aa).

Residues Thr161, 177 to 178 (SC), Gly206, 386 to 390 (NLCSE), and 588 to 592 (PTGSI) each bind substrate. Cys178 and Cys415 are oxidised to a cystine. The active-site Proton acceptor is the Asn386. Cys388 serves as the catalytic Cysteine radical intermediate. The active-site Proton acceptor is the Glu390.

Belongs to the ribonucleoside diphosphate reductase large chain family. Tetramer of two alpha and two beta subunits.

It catalyses the reaction a 2'-deoxyribonucleoside 5'-diphosphate + [thioredoxin]-disulfide + H2O = a ribonucleoside 5'-diphosphate + [thioredoxin]-dithiol. Its activity is regulated as follows. Under complex allosteric control mediated by deoxynucleoside triphosphates and ATP binding. The type of nucleotide bound at the specificity site determines substrate preference. It seems probable that ATP makes the enzyme reduce CDP and UDP, dGTP favors ADP reduction and dTTP favors GDP reduction. In terms of biological role, provides the precursors necessary for DNA synthesis. Catalyzes the biosynthesis of deoxyribonucleotides from the corresponding ribonucleotides. R1E contains the binding sites for both substrates and allosteric effectors and carries out the actual reduction of the ribonucleotide. The chain is Ribonucleoside-diphosphate reductase 2 subunit alpha (nrdE) from Escherichia coli (strain K12).